The chain runs to 485 residues: PTS system arbutin-, cellobiose-, and salicin-specific EIIBC component (485 aa).

Residues 1–88 form the PTS EIIB type-1 domain; sequence MAKNYAALAR…VSLLPGDMQP (88 aa). Cys28 acts as the Phosphocysteine intermediate; for EIIB activity in catalysis. A run of 10 helical transmembrane segments spans residues 102–122, 147–167, 177–197, 207–227, 254–274, 285–305, 330–350, 363–383, 389–409, and 433–453; these read IGAGILDALIGTMSPLIPAII, LTILNVIGDGAFFFLPLMVAA, MSLAIAIAGVLVHPSFIELMA, FALIPVTAVKYTYTVIPALVM, LIVLIAAPLAILLIGPIGIWI, IHGYLGWLSVAIMGALWPLLV, VMPSEIGANLSLGGSSLAVAW, AAAASAIMAGISEPALYGVAI, LIASLISGFICGAVAGMAGLA, and IVWVFAVMALAVVLSFILTLL. In terms of domain architecture, PTS EIIC type-1 spans 108 to 470; the sequence is DALIGTMSPL…VEEAAAQARK (363 aa).

It localises to the cell inner membrane. Functionally, the phosphoenolpyruvate-dependent sugar phosphotransferase system (sugar PTS), a major carbohydrate active -transport system, catalyzes the phosphorylation of incoming sugar substrates concomitantly with their translocation across the cell membrane. This system is involved in arbutin, cellobiose, and salicin transport. The sequence is that of PTS system arbutin-, cellobiose-, and salicin-specific EIIBC component (ascF) from Escherichia coli (strain K12).